The following is a 232-amino-acid chain: Sugar fermentation stimulation protein homolog (232 aa).

The protein belongs to the SfsA family.

The chain is Sugar fermentation stimulation protein homolog from Ruegeria sp. (strain TM1040) (Silicibacter sp.).